Here is a 278-residue protein sequence, read N- to C-terminus: Alcohol dehydrogenase-related 31 kDa protein (278 aa).

11–34 (YVADCGGIALETSKVLMTKNIAKL) provides a ligand contact to NAD(+). Substrate is bound at residue S139. The Proton acceptor role is filled by Y152.

The protein belongs to the short-chain dehydrogenases/reductases (SDR) family.

This Drosophila pseudoobscura pseudoobscura (Fruit fly) protein is Alcohol dehydrogenase-related 31 kDa protein (Adhr).